We begin with the raw amino-acid sequence, 219 residues long: Ribose-5-phosphate isomerase A (219 aa).

Residues 28 to 31 (TGST), 81 to 84 (DGAD), and 94 to 97 (KGGG) contribute to the substrate site. Catalysis depends on Glu103, which acts as the Proton acceptor. A substrate-binding site is contributed by Lys121.

Belongs to the ribose 5-phosphate isomerase family. As to quaternary structure, homodimer.

It catalyses the reaction aldehydo-D-ribose 5-phosphate = D-ribulose 5-phosphate. It participates in carbohydrate degradation; pentose phosphate pathway; D-ribose 5-phosphate from D-ribulose 5-phosphate (non-oxidative stage): step 1/1. Its function is as follows. Catalyzes the reversible conversion of ribose-5-phosphate to ribulose 5-phosphate. The polypeptide is Ribose-5-phosphate isomerase A (Escherichia fergusonii (strain ATCC 35469 / DSM 13698 / CCUG 18766 / IAM 14443 / JCM 21226 / LMG 7866 / NBRC 102419 / NCTC 12128 / CDC 0568-73)).